The following is a 379-amino-acid chain: S-adenosylmethionine decarboxylase proenzyme (379 aa).

Catalysis depends on residues Glu-30 and Glu-33. Ser-96 serves as the catalytic Schiff-base intermediate with substrate; via pyruvic acid. Ser-96 carries the post-translational modification Pyruvic acid (Ser); by autocatalysis. The Proton donor; for catalytic activity role is filled by Cys-110. Residues Ser-254 and His-267 each act as proton acceptor; for processing activity in the active site.

Belongs to the eukaryotic AdoMetDC family. Heterotetramer of two alpha and two beta chains. Pyruvate serves as cofactor. In terms of processing, is synthesized initially as an inactive proenzyme. Formation of the active enzyme involves a self-maturation process in which the active site pyruvoyl group is generated from an internal serine residue via an autocatalytic post-translational modification. Two non-identical subunits are generated from the proenzyme in this reaction, and the pyruvate is formed at the N-terminus of the alpha chain, which is derived from the carboxyl end of the proenzyme. The post-translation cleavage follows an unusual pathway, termed non-hydrolytic serinolysis, in which the side chain hydroxyl group of the serine supplies its oxygen atom to form the C-terminus of the beta chain, while the remainder of the serine residue undergoes an oxidative deamination to produce ammonia and the pyruvoyl group blocking the N-terminus of the alpha chain.

It catalyses the reaction S-adenosyl-L-methionine + H(+) = S-adenosyl 3-(methylsulfanyl)propylamine + CO2. Its pathway is amine and polyamine biosynthesis; S-adenosylmethioninamine biosynthesis; S-adenosylmethioninamine from S-adenosyl-L-methionine: step 1/1. Its function is as follows. S-adenosylmethionine decarboxylase is essential for the biosynthesis of spermine and spermidine. The alpha subunit contains the active site. This Dictyostelium discoideum (Social amoeba) protein is S-adenosylmethionine decarboxylase proenzyme (amd1).